Reading from the N-terminus, the 630-residue chain is Peptidyl-prolyl cis-trans isomerase cyp15 (630 aa).

The disordered stretch occupies residues 1–46 (MPEDSNTNDNNKRPLEDNNAVDGESDDDIGPMLPPPPGEDAPRKKK). WD repeat units lie at residues 70 to 108 (MHRD…IEFV), 113 to 152 (SHLS…MINM), 157 to 198 (YKPK…KPLH), 203 to 242 (MHSK…ALPD), and 258 to 301 (RKKK…REYD). The 155-residue stretch at 475 to 629 (LGTSAIIRTT…DDIKIINIDI (155 aa)) folds into the PPIase cyclophilin-type domain.

The protein belongs to the cyclophilin-type PPIase family.

It catalyses the reaction [protein]-peptidylproline (omega=180) = [protein]-peptidylproline (omega=0). Its function is as follows. PPIases accelerate the folding of proteins. It catalyzes the cis-trans isomerization of proline imidic peptide bonds in oligopeptides. In Rhizopus delemar (strain RA 99-880 / ATCC MYA-4621 / FGSC 9543 / NRRL 43880) (Mucormycosis agent), this protein is Peptidyl-prolyl cis-trans isomerase cyp15 (cyp15).